The primary structure comprises 165 residues: Phosphopantetheine adenylyltransferase (165 aa).

Thr-11 contributes to the substrate binding site. ATP-binding positions include 11-12 and His-19; that span reads TF. Substrate contacts are provided by Lys-43, Val-75, and Arg-89. Residues 90-92, Glu-100, and 125-131 contribute to the ATP site; these read GLR and YQFISST.

The protein belongs to the bacterial CoaD family. In terms of assembly, homohexamer. It depends on Mg(2+) as a cofactor.

The protein resides in the cytoplasm. It catalyses the reaction (R)-4'-phosphopantetheine + ATP + H(+) = 3'-dephospho-CoA + diphosphate. The protein operates within cofactor biosynthesis; coenzyme A biosynthesis; CoA from (R)-pantothenate: step 4/5. Its function is as follows. Reversibly transfers an adenylyl group from ATP to 4'-phosphopantetheine, yielding dephospho-CoA (dPCoA) and pyrophosphate. This chain is Phosphopantetheine adenylyltransferase, found in Acidovorax ebreus (strain TPSY) (Diaphorobacter sp. (strain TPSY)).